A 343-amino-acid polypeptide reads, in one-letter code: tRNA N6-adenosine threonylcarbamoyltransferase (343 aa).

Residues histidine 120 and histidine 124 each coordinate Fe cation. Residues 142 to 146, aspartate 175, glycine 188, aspartate 192, and asparagine 281 contribute to the substrate site; that span reads VVSGG. Aspartate 310 contributes to the Fe cation binding site.

The protein belongs to the KAE1 / TsaD family. It depends on Fe(2+) as a cofactor.

It localises to the cytoplasm. The enzyme catalyses L-threonylcarbamoyladenylate + adenosine(37) in tRNA = N(6)-L-threonylcarbamoyladenosine(37) in tRNA + AMP + H(+). In terms of biological role, required for the formation of a threonylcarbamoyl group on adenosine at position 37 (t(6)A37) in tRNAs that read codons beginning with adenine. Is involved in the transfer of the threonylcarbamoyl moiety of threonylcarbamoyl-AMP (TC-AMP) to the N6 group of A37, together with TsaE and TsaB. TsaD likely plays a direct catalytic role in this reaction. The protein is tRNA N6-adenosine threonylcarbamoyltransferase of Bacillus cereus (strain ATCC 14579 / DSM 31 / CCUG 7414 / JCM 2152 / NBRC 15305 / NCIMB 9373 / NCTC 2599 / NRRL B-3711).